Reading from the N-terminus, the 185-residue chain is C-type lectin domain family 5 member A (185 aa).

Residues 1–4 are Cytoplasmic-facing; it reads MNWH. A helical; Signal-anchor for type II membrane protein transmembrane segment spans residues 5 to 27; that stretch reads MIISGLIVVVLKIVGMTFFLLYF. The Extracellular segment spans residues 28–185; sequence PQIFGEHNVS…YRSICEKSAQ (158 aa). 2 N-linked (GlcNAc...) asparagine glycosylation sites follow: asparagine 35 and asparagine 55. The cysteines at positions 68 and 79 are disulfide-linked. Positions 75 to 181 constitute a C-type lectin domain; it reads HQGRCFFLST…CDVNYRSICE (107 aa). N-linked (GlcNAc...) asparagine glycosylation is found at asparagine 90, asparagine 117, asparagine 141, and asparagine 146. 2 disulfide bridges follow: cysteine 96–cysteine 180 and cysteine 158–cysteine 172.

In terms of assembly, monomer. Homodimer. The majority of CLEC5A is expressed as a monomeric form on macrophages. Interacts with TYROBP/DAP12. The interaction with TYROBP is required for CLEC5 cell surface expression. Interacts with HCST/DAP10. Forms a CLEC5A/TYROBP/HCST trimolecular complex depending almost solely on TYROBP. N-glycosylated. Contains sialic acid residues. Constitutively expressed in monocytes and macrophages.

The protein resides in the cell membrane. Functions as a positive regulator of osteoclastogenesis. Cell surface receptor that signals via TYROBP. Regulates inflammatory responses. This is C-type lectin domain family 5 member A (CLEC5A) from Sus scrofa (Pig).